We begin with the raw amino-acid sequence, 343 residues long: Uroporphyrinogen decarboxylase (343 aa).

Substrate-binding positions include 23 to 27, D73, Y151, S206, and H319; that span reads RQAGR.

It belongs to the uroporphyrinogen decarboxylase family. In terms of assembly, homodimer.

The protein resides in the cytoplasm. The enzyme catalyses uroporphyrinogen III + 4 H(+) = coproporphyrinogen III + 4 CO2. Its pathway is porphyrin-containing compound metabolism; protoporphyrin-IX biosynthesis; coproporphyrinogen-III from 5-aminolevulinate: step 4/4. Catalyzes the decarboxylation of four acetate groups of uroporphyrinogen-III to yield coproporphyrinogen-III. The polypeptide is Uroporphyrinogen decarboxylase (Sulfurimonas denitrificans (strain ATCC 33889 / DSM 1251) (Thiomicrospira denitrificans (strain ATCC 33889 / DSM 1251))).